Consider the following 376-residue polypeptide: MFQLSVQDIHPGEQVGNKEEAIRQIAAALAQAGNVAGGYVDGMLAREQQTSTFLGNGIAIPHGTTDTRDQVLKTGVQVFQFPQGVTWGEGQVAYVAIGIAASSDEHLGLLRQLTHVLSDDSVAEQLKSATTAEELRALLMGEKQSEQLKLDNETMTLDVIASSLVTLQALNAARLKEAGAVDAAFVAKTINDSPMNLGQGIWLNDSAEGNLRSAVAVSRATQAFDVEGEKAALLVTVAMNDEQPIAVLKRLGDLLLNNKADRLLSADAATLLALLTSDDALTDDVLSAEFVVRNEHGLHARPGTMLVNTIKQFNSEITVTNLDGTGKPANGRSLMKVVALGVKKGHRLRFTAQGEDAEQALKAIGDAIAAGLGEGA.

The region spanning 2 to 142 (FQLSVQDIHP…EELRALLMGE (141 aa)) is the PTS EIIA type-2 domain. His-62 serves as the catalytic Tele-phosphohistidine intermediate; for EIIA activity. At His-62 the chain carries Phosphohistidine; by HPr. The segment at 156–284 (TLDVIASSLV…LTSDDALTDD (129 aa)) is m domain. In terms of domain architecture, HPr spans 285–375 (VLSAEFVVRN…DAIAAGLGEG (91 aa)). His-299 acts as the Pros-phosphohistidine intermediate; for HPr activity in catalysis. Position 299 is a phosphohistidine; by EI (His-299).

It is found in the cytoplasm. The phosphoenolpyruvate-dependent sugar phosphotransferase system (sugar PTS), a major carbohydrate active transport system, catalyzes the phosphorylation of incoming sugar substrates concomitantly with their translocation across the cell membrane. The enzyme II FruAB PTS system is involved in fructose transport. The polypeptide is Multiphosphoryl transfer protein (fruB) (Salmonella typhi).